Here is a 210-residue protein sequence, read N- to C-terminus: tRNA (guanine-N(7)-)-methyltransferase (210 aa).

S-adenosyl-L-methionine-binding residues include E43, E68, D95, and D117. D117 is a catalytic residue. Residues K121, D153, and 190 to 193 (TEYE) contribute to the substrate site.

This sequence belongs to the class I-like SAM-binding methyltransferase superfamily. TrmB family.

The catalysed reaction is guanosine(46) in tRNA + S-adenosyl-L-methionine = N(7)-methylguanosine(46) in tRNA + S-adenosyl-L-homocysteine. The protein operates within tRNA modification; N(7)-methylguanine-tRNA biosynthesis. Its function is as follows. Catalyzes the formation of N(7)-methylguanine at position 46 (m7G46) in tRNA. The chain is tRNA (guanine-N(7)-)-methyltransferase from Macrococcus caseolyticus (strain JCSC5402) (Macrococcoides caseolyticum).